Reading from the N-terminus, the 564-residue chain is NAD-dependent malic enzyme (564 aa).

Catalysis depends on tyrosine 102, which acts as the Proton donor. Arginine 155 contacts NAD(+). The active-site Proton acceptor is the lysine 173. Residues glutamate 244, aspartate 245, and aspartate 268 each contribute to the a divalent metal cation site. Aspartate 268 and asparagine 417 together coordinate NAD(+).

This sequence belongs to the malic enzymes family. Homotetramer. It depends on Mg(2+) as a cofactor. Requires Mn(2+) as cofactor.

It catalyses the reaction (S)-malate + NAD(+) = pyruvate + CO2 + NADH. The catalysed reaction is oxaloacetate + H(+) = pyruvate + CO2. The sequence is that of NAD-dependent malic enzyme from Pseudomonas aeruginosa (strain UCBPP-PA14).